Here is a 447-residue protein sequence, read N- to C-terminus: MKDLISIINVKDHVGETVKIGAWVADKSGKGKLQFLQLRDGTAFFQAVVFKPNMIEKFGEEEGTAKFDEIKHLSQETSVYVTGVVKEDSRSKFGYELDVTELEVIGHSHDYPITPKEHGVEFLLDNRHLWLRSKRQMAMMQVRNAIIYASYDFFAKNGFIKFDSPILSGNAAENTTELFETDYFGNSAFLSQSGQLYLEAGAMALGRVFDFGPVFRAEKSKTRRHLTEFWMMDAEYPFVTHDESLDIQEAYVKALIQGVLDNAAYALETLERDTSMLQKYIDTPFKRVSYDDAIDLLQAHENDDDTDYEHVEHGDDFGSPHETWISNYYGVPTFIVNYPASFKAFYMKPVPGNPERVLCADLLAPEGYGEIIGGSERETDYDLLLKKIADFGLDPKDYDWYLELRKFGSVPHAGFGLGLERMVTFVAGTEHIREAIPFPRMINRIQP.

This sequence belongs to the class-II aminoacyl-tRNA synthetase family. In terms of assembly, homodimer.

Its subcellular location is the cytoplasm. It catalyses the reaction tRNA(Asn) + L-asparagine + ATP = L-asparaginyl-tRNA(Asn) + AMP + diphosphate + H(+). The protein is Asparagine--tRNA ligase of Lactococcus lactis subsp. cremoris (strain SK11).